A 94-amino-acid polypeptide reads, in one-letter code: Cell division topological specificity factor (94 aa).

Belongs to the MinE family.

In terms of biological role, prevents the cell division inhibition by proteins MinC and MinD at internal division sites while permitting inhibition at polar sites. This ensures cell division at the proper site by restricting the formation of a division septum at the midpoint of the long axis of the cell. This chain is Cell division topological specificity factor, found in Synechococcus sp. (strain CC9311).